Consider the following 214-residue polypeptide: Large ribosomal subunit protein uL18 (214 aa).

This sequence belongs to the universal ribosomal protein uL18 family. As to quaternary structure, part of the 50S ribosomal subunit. Contacts the 5S and 23S rRNAs.

In terms of biological role, this is one of the proteins that bind and probably mediate the attachment of the 5S RNA into the large ribosomal subunit, where it forms part of the central protuberance. The chain is Large ribosomal subunit protein uL18 from Aeropyrum pernix (strain ATCC 700893 / DSM 11879 / JCM 9820 / NBRC 100138 / K1).